Here is a 321-residue protein sequence, read N- to C-terminus: Collectin-43 (321 aa).

The first 20 residues, 1–20 (MLPLPLSILLLLTQSQSFLG), serve as a signal peptide directing secretion. Residues 43–163 (PADSLRGHDG…GEKGARGETS (121 aa)) form a disordered region. Basic and acidic residues predominate over residues 47–65 (LRGHDGRDGKEGPQGEKGD). Residues 49–162 (GHDGRDGKEG…PGEKGARGET (114 aa)) enclose the Collagen-like domain. Gly residues-rich tracts occupy residues 100–109 (GPEGGVGAPG) and 124–133 (GTPGPGGAIG). The segment covering 147-159 (KGDRGDPGEKGAR) has biased composition (basic and acidic residues). Residues 222 to 321 (QLCREAKGQL…REERLVICEF (100 aa)) form the C-type lectin domain. Intrachain disulfides connect Cys-224/Cys-319 and Cys-297/Cys-311.

It belongs to the SFTPD family. As to quaternary structure, oligomeric complex of 4 set of homotrimers. Hydroxylated. Liver specific.

Its subcellular location is the secreted. Functionally, lectin that binds to various sugars: mannose = ManNAc &gt; fucose &gt; GlcNAc &gt; glucose = maltose &gt; galactose &gt; lactose &gt; GalNAc. Could play a role in immune defense. The chain is Collectin-43 (CL43) from Bos taurus (Bovine).